The chain runs to 368 residues: tRNA-specific 2-thiouridylase MnmA (368 aa).

Residues 11-18 (GMSGGVDS) and Met37 each bind ATP. The segment at 97 to 99 (NPD) is interaction with target base in tRNA. Residue Cys102 is the Nucleophile of the active site. Cys102 and Cys199 are disulfide-bonded. Position 127 (Gly127) interacts with ATP. The segment at 149-151 (KDQ) is interaction with tRNA. Residue Cys199 is the Cysteine persulfide intermediate of the active site. The segment at 311-312 (RY) is interaction with tRNA.

It belongs to the MnmA/TRMU family. In terms of assembly, interacts with TusE.

The protein resides in the cytoplasm. The enzyme catalyses S-sulfanyl-L-cysteinyl-[protein] + uridine(34) in tRNA + AH2 + ATP = 2-thiouridine(34) in tRNA + L-cysteinyl-[protein] + A + AMP + diphosphate + H(+). In terms of biological role, catalyzes the 2-thiolation of uridine at the wobble position (U34) of tRNA(Lys), tRNA(Glu) and tRNA(Gln), leading to the formation of s(2)U34, the first step of tRNA-mnm(5)s(2)U34 synthesis. Sulfur is provided by IscS, via a sulfur-relay system. Binds ATP and its substrate tRNAs. This is tRNA-specific 2-thiouridylase MnmA from Shigella dysenteriae serotype 1 (strain Sd197).